A 113-amino-acid chain; its full sequence is UPF0416 protein RF_0879 (113 aa).

This sequence belongs to the UPF0416 family.

The polypeptide is UPF0416 protein RF_0879 (Rickettsia felis (strain ATCC VR-1525 / URRWXCal2) (Rickettsia azadi)).